The following is a 325-amino-acid chain: Cln5-like protein 2 (325 aa).

The first 19 residues, 1–19, serve as a signal peptide directing secretion; the sequence is MNKLIFIIICLGIVDKTIS. 8 N-linked (GlcNAc...) asparagine glycosylation sites follow: N88, N117, N133, N163, N182, N189, N238, and N262.

Belongs to the CLN5 family.

This Dictyostelium discoideum (Social amoeba) protein is Cln5-like protein 2 (cln5lb).